The sequence spans 289 residues: Zinc finger matrin-type protein 3 (289 aa).

The segment at 1 to 42 (MILLQHAVLPPPKQPSPSPPMSVATRSTGTLQLPPQKPFGQE) is disordered. Residues 9 to 20 (LPPPKQPSPSPP) are compositionally biased toward pro residues. The segment covering 24-33 (ATRSTGTLQL) has biased composition (polar residues). Matrin-type zinc fingers lie at residues 70–100 (LYCK…KLRN) and 147–177 (DYCK…RLRL). The span at 180–191 (AQSNSFSESSEL) shows a compositional bias: polar residues. Positions 180–201 (AQSNSFSESSELGQRRARKEGN) are disordered. Residues 246-276 (FYCSMCNVGAGEEMEFRQHLESKQHKSKVSE) form a Matrin-type 3 zinc finger.

In terms of assembly, interacts with dsRNA. As to expression, highly expressed in adult brain, and moderately in adult kidney and testis. Not detected in fetal brain, heart, pancreas, adrenal gland, liver or small intestine.

It is found in the nucleus. Its subcellular location is the nucleolus. Its function is as follows. Acts as a bona fide target gene of p53/TP53. May play a role in the TP53-dependent growth regulatory pathway. May contribute to TP53-mediated apoptosis by regulation of TP53 expression and translocation to the nucleus and nucleolus. The sequence is that of Zinc finger matrin-type protein 3 from Homo sapiens (Human).